The primary structure comprises 243 residues: Biosynthetic peptidoglycan transglycosylase (243 aa).

Residues 22–42 form a helical membrane-spanning segment; it reads LIVLLVLALMSVLQVIVFRFV.

It belongs to the glycosyltransferase 51 family.

The protein localises to the cell inner membrane. The enzyme catalyses [GlcNAc-(1-&gt;4)-Mur2Ac(oyl-L-Ala-gamma-D-Glu-L-Lys-D-Ala-D-Ala)](n)-di-trans,octa-cis-undecaprenyl diphosphate + beta-D-GlcNAc-(1-&gt;4)-Mur2Ac(oyl-L-Ala-gamma-D-Glu-L-Lys-D-Ala-D-Ala)-di-trans,octa-cis-undecaprenyl diphosphate = [GlcNAc-(1-&gt;4)-Mur2Ac(oyl-L-Ala-gamma-D-Glu-L-Lys-D-Ala-D-Ala)](n+1)-di-trans,octa-cis-undecaprenyl diphosphate + di-trans,octa-cis-undecaprenyl diphosphate + H(+). The protein operates within cell wall biogenesis; peptidoglycan biosynthesis. Its function is as follows. Peptidoglycan polymerase that catalyzes glycan chain elongation from lipid-linked precursors. This chain is Biosynthetic peptidoglycan transglycosylase, found in Xylella fastidiosa (strain 9a5c).